Consider the following 171-residue polypeptide: Voltage-dependent P/Q-type calcium channel subunit alpha-1A (171 aa).

A helical transmembrane segment spans residues 1–11 (FVTVLGSITDI). The IV repeat unit spans residues 1 to 171 (FVTVLGSITD…LMLNLFVAVI (171 aa)). Residues 12-18 (LVTEFGN) lie on the Extracellular side of the membrane. The helical transmembrane segment at 19-37 (NFINLSFLRLFRAARLIKL) threads the bilayer. Topologically, residues 38 to 56 (LRQGYTIRILLWTFVQSFK) are cytoplasmic. Residues 57-76 (ALPYVCLLIAMLFFIYAIIG) form a helical membrane-spanning segment. The Extracellular segment spans residues 77 to 143 (MQVFGNIGIE…ENSGIKEDEC (67 aa)). A helical membrane pass occupies residues 144–168 (GNEFAYFYFVSFIFLCSFLMLNLFV). Residues 169 to 171 (AVI) are Cytoplasmic-facing.

The protein belongs to the calcium channel alpha-1 subunit (TC 1.A.1.11) family. CACNA1A subfamily. Voltage-dependent calcium channels are multisubunit complexes, consisting of alpha-1, alpha-2, beta and delta subunits in a 1:1:1:1 ratio. The channel activity is directed by the pore-forming and voltage-sensitive alpha-1 subunit. In many cases, this subunit is sufficient to generate voltage-sensitive calcium channel activity. The auxiliary subunits beta and alpha-2/delta linked by a disulfide bridge regulate the channel activity.

The protein resides in the cell membrane. It carries out the reaction Ca(2+)(in) = Ca(2+)(out). The isoform alpha-1A gives rise to P and/or Q-type calcium currents. P/Q-type calcium channels belong to the 'high-voltage activated' (HVA) group. This is Voltage-dependent P/Q-type calcium channel subunit alpha-1A (CACNA1A) from Gallus gallus (Chicken).